The following is a 507-amino-acid chain: Probable serine/threonine-protein kinase DDB_G0268078 (507 aa).

One can recognise a Protein kinase domain in the interval 4–286 (YQFIKQVGDG…PLQALQHRYF (283 aa)). ATP-binding positions include 10–18 (VGDGAYGDV) and K33. The active-site Proton acceptor is D125. The segment covering 323–347 (NYSNNNNNNNLNSNSENLNNVNKNN) has biased composition (low complexity). Disordered stretches follow at residues 323–364 (NYSN…PKNS), 381–404 (NVNN…KLDS), and 428–507 (QQPP…NSKL). The segment covering 348 to 361 (QQPHSPQKIQTPKP) has biased composition (polar residues). Positions 381 to 399 (NVNNNNNNYNSNTTSGYYN) are enriched in low complexity. Residues 429–450 (QPPPQSQPPQSQPPPQSQPPPI) are compositionally biased toward pro residues. Residues 451–470 (LTQQQQQQQQQQQQQQQLPS) are compositionally biased toward low complexity. Composition is skewed to polar residues over residues 471–481 (KTTIYHNTNHL) and 491–507 (RGIS…NSKL).

It belongs to the protein kinase superfamily. CMGC Ser/Thr protein kinase family. CDC2/CDKX subfamily.

The catalysed reaction is L-seryl-[protein] + ATP = O-phospho-L-seryl-[protein] + ADP + H(+). It carries out the reaction L-threonyl-[protein] + ATP = O-phospho-L-threonyl-[protein] + ADP + H(+). This chain is Probable serine/threonine-protein kinase DDB_G0268078, found in Dictyostelium discoideum (Social amoeba).